The chain runs to 321 residues: Lipoyl synthase (321 aa).

[4Fe-4S] cluster is bound by residues Cys68, Cys73, Cys79, Cys94, Cys98, Cys101, and Ser308. A Radical SAM core domain is found at 80-297; that stretch reads FNHGTATFMI…KAEAMAMGFT (218 aa).

The protein belongs to the radical SAM superfamily. Lipoyl synthase family. The cofactor is [4Fe-4S] cluster.

It is found in the cytoplasm. It carries out the reaction [[Fe-S] cluster scaffold protein carrying a second [4Fe-4S](2+) cluster] + N(6)-octanoyl-L-lysyl-[protein] + 2 oxidized [2Fe-2S]-[ferredoxin] + 2 S-adenosyl-L-methionine + 4 H(+) = [[Fe-S] cluster scaffold protein] + N(6)-[(R)-dihydrolipoyl]-L-lysyl-[protein] + 4 Fe(3+) + 2 hydrogen sulfide + 2 5'-deoxyadenosine + 2 L-methionine + 2 reduced [2Fe-2S]-[ferredoxin]. The protein operates within protein modification; protein lipoylation via endogenous pathway; protein N(6)-(lipoyl)lysine from octanoyl-[acyl-carrier-protein]: step 2/2. Its function is as follows. Catalyzes the radical-mediated insertion of two sulfur atoms into the C-6 and C-8 positions of the octanoyl moiety bound to the lipoyl domains of lipoate-dependent enzymes, thereby converting the octanoylated domains into lipoylated derivatives. This Pectobacterium atrosepticum (strain SCRI 1043 / ATCC BAA-672) (Erwinia carotovora subsp. atroseptica) protein is Lipoyl synthase.